The following is a 177-amino-acid chain: Large ribosomal subunit protein uL6 (177 aa).

Belongs to the universal ribosomal protein uL6 family. Part of the 50S ribosomal subunit.

In terms of biological role, this protein binds to the 23S rRNA, and is important in its secondary structure. It is located near the subunit interface in the base of the L7/L12 stalk, and near the tRNA binding site of the peptidyltransferase center. This chain is Large ribosomal subunit protein uL6, found in Polynucleobacter necessarius subsp. necessarius (strain STIR1).